The chain runs to 1372 residues: MLSFVDTRTLLLLAVTSCLATCQSLQMGSVRKGPTGDRGPRGQRGPAGPRGRDGVDGPVGPPGPPGAPGPPGPPGPPGLTGNFAAQYSDKGVSAGPGPMGLMGPRGPPGAVGAPGPQGFQGPAGEPGEPGQTGPAGSRGPAGPPGKAGEDGHPGKPGRPGERGVVGPQGARGFPGTPGLPGFKGIRGHNGLDGLKGQPGAQGVKGEPGAPGENGTPGQAGARGLPGERGRVGAPGPAGARGSDGSVGPVGPAGPIGSAGPPGFPGAPGPKGELGPVGNPGPAGPAGPRGEAGLPGLSGPVGPPGNPGANGLTGAKGATGLPGVAGAPGLPGPRGIPGPVGAAGATGPRGLVGEPGPAGSKGETGNKGEPGSAGAQGPPGPSGEEGKRGSPGEPGSAGPAGPPGLRGSPGSRGLPGADGRAGVMGPPGNRGSTGPAGVRGPNGDAGRPGEPGLMGPRGLPGSPGNVGPAGKEGPVGLPGIDGRPGPIGPAGPRGEAGNIGFPGPKGPSGDPGKPGEKGHPGLAGARGAPGPDGNNGAQGPPGPQGVQGGKGEQGPAGPPGFQGLPGPSGTAGEVGKPGERGLPGEFGLPGPAGPRGERGPPGESGAAGPSGPIGIRGPSGAPGPDGNKGEAGAVGAPGSAGASGPGGLPGERGAAGIPGGKGEKGETGLRGEIGNPGRDGARGAPGAIGAPGPAGASGDRGEAGAAGPSGPAGPRGSPGERGEVGPAGPNGFAGPAGSAGQPGAKGEKGTKGPKGENGIVGPTGPVGAAGPSGPNGPPGPAGSRGDGGPPGMTGFPGAAGRTGPPGPSGITGPPGPPGAAGKEGIRGPRGDQGPVGRTGEIGASGPPGFAGEKGPSGEPGTTGPPGTAGPQGLLGAPGILGLPGSRGERGQPGIAGALGEPGPLGIAGPPGARGPPGAVGSPGVNGAPGEAGRDGNPGSDGPPGRDGQPGHKGERGYPGNIGPTGAAGAPGPHGSVGPAGKHGNRGEPGPAGSVGPVGAVGPRGPSGPQGIRGDKGEPGDKGARGLPGLKGHNGLQGLPGLAGLHGDQGAPGPVGPAGPRGPAGPSGPIGKDGRSGHPGPVGPAGVRGSQGSQGPAGPPGPPGPPGPPGVSGGGYDFGFEGGFYRADQPRSQPSLRPKDYEVDATLKSLNNQIETLLTPEGSRKNPARTCRDLRLSHPEWKSDYYWIDPNQGCTMDAIKVYCDFSTGETCIQAQPVNTPAKNAYSRAQANKHVWLGETINGGSQFEYNAEGVSSKEMATQLAFMRLLANRASQNITYHCKNSIAYLDEETGRLNKAVILQGSNDVELVAEGNSRFTYTVLVDGCSKKTNEWDKTVIEYKTNKPSRLPFLDIAPLDIGGTNQEFRVEVGPVCFK.

A signal peptide spans 1 to 22; sequence MLSFVDTRTLLLLAVTSCLATC. Pyrrolidone carboxylic acid is present on glutamine 23. The propeptide at 23–85 is N-terminal propeptide; it reads QSLQMGSVRK…PPGLTGNFAA (63 aa). The segment at 28-1135 is disordered; it reads GSVRKGPTGD…DQPRSQPSLR (1108 aa). Over residues 59–77 the composition is skewed to pro residues; that stretch reads VGPPGPPGAPGPPGPPGPP. A Pyrrolidone carboxylic acid modification is found at glutamine 86. Lysine 90 bears the Allysine mark. The span at 95–146 shows a compositional bias: low complexity; the sequence is GPGPMGLMGPRGPPGAVGAPGPQGFQGPAGEPGEPGQTGPAGSRGPAGPPGK. Basic and acidic residues predominate over residues 147 to 161; sequence AGEDGHPGKPGRPGE. Position 183 is a 5-hydroxylysine; alternate (lysine 183). Lysine 183 carries O-linked (Gal...) hydroxylysine; alternate glycosylation. 7 stretches are compositionally biased toward low complexity: residues 231-260, 285-299, 306-327, 336-348, 390-416, 476-495, and 519-537; these read VGAP…SAGP, AGPR…LSGP, PGAN…AGAP, PGPV…TGPR, PGEP…LPGA, LPGI…RGEA, and PGLA…NGAQ. Residues 544-553 are compositionally biased toward gly residues; the sequence is GVQGGKGEQG. The segment covering 600-639 has biased composition (low complexity); sequence PGESGAAGPSGPIGIRGPSGAPGPDGNKGEAGAVGAPGSA. The span at 640-649 shows a compositional bias: gly residues; sequence GASGPGGLPG. Composition is skewed to low complexity over residues 674 to 716 and 725 to 743; these read NPGR…PRGS and PAGP…QPGA. The span at 744–753 shows a compositional bias: basic and acidic residues; the sequence is KGEKGTKGPK. Positions 755–771 are enriched in low complexity; it reads ENGIVGPTGPVGAAGPS. Over residues 781 to 790 the composition is skewed to gly residues; the sequence is GSRGDGGPPG. The Cell attachment site motif lies at 783–785; it reads RGD. Over residues 792 to 801 the composition is skewed to low complexity; sequence TGFPGAAGRT. A Cell attachment site motif is present at residues 828-830; it reads RGD. Low complexity-rich tracts occupy residues 855–882, 891–927, 957–978, and 987–1007; these read SGEP…LGLP, PGIA…NGAP, PGNI…VGPA, and PGPA…PSGP. Positions 1011 to 1013 match the Cell attachment site motif; it reads RGD. The span at 1011-1022 shows a compositional bias: basic and acidic residues; sequence RGDKGEPGDKGA. Residues 1095–1107 show a composition bias toward pro residues; it reads AGPPGPPGPPGPP. Positions 1108 to 1120 are enriched in gly residues; sequence GVSGGGYDFGFEG. The propeptide at 1126-1372 is C-terminal propeptide; it reads DQPRSQPSLR…RVEVGPVCFK (247 aa). The region spanning 1139–1372 is the Fibrillar collagen NC1 domain; it reads YEVDATLKSL…RVEVGPVCFK (234 aa). Intrachain disulfides connect cysteine 1169–cysteine 1201, cysteine 1209–cysteine 1370, and cysteine 1278–cysteine 1323. Aspartate 1187, asparagine 1189, glutamine 1190, cysteine 1192, and aspartate 1195 together coordinate Ca(2+). Asparagine 1273 carries N-linked (GlcNAc...) asparagine glycosylation.

The protein belongs to the fibrillar collagen family. In terms of assembly, trimers of one alpha 2(I) and two alpha 1(I) chains. Interacts (via C-terminus) with TMEM131 (via PapD-L domain); the interaction is direct and is involved in assembly and TRAPPIII ER-to-Golgi transport complex-dependent secretion of collagen. Proline residues at the third position of the tripeptide repeating unit (G-X-P) are hydroxylated in some or all of the chains. Proline residues at the second position of the tripeptide repeating unit (G-P-X) are hydroxylated in some of the chains. As to expression, forms the fibrils of tendon, ligaments and bones. In bones the fibrils are mineralized with calcium hydroxyapatite. Expressed in flagella of epididymal sperm.

It is found in the secreted. The protein localises to the extracellular space. It localises to the extracellular matrix. Functionally, type I collagen is a member of group I collagen (fibrillar forming collagen). The protein is Collagen alpha-2(I) chain (Col1a2) of Rattus norvegicus (Rat).